The chain runs to 401 residues: Acetate kinase (401 aa).

Asparagine 7 lines the Mg(2+) pocket. Lysine 14 provides a ligand contact to ATP. Arginine 91 lines the substrate pocket. Aspartate 148 functions as the Proton donor/acceptor in the catalytic mechanism. ATP contacts are provided by residues 208 to 212, 283 to 285, and 331 to 335; these read HLGNG, DFR, and GVGEN. A Mg(2+)-binding site is contributed by glutamate 384.

It belongs to the acetokinase family. In terms of assembly, homodimer. Mg(2+) is required as a cofactor. Mn(2+) serves as cofactor.

It is found in the cytoplasm. The enzyme catalyses acetate + ATP = acetyl phosphate + ADP. Its pathway is metabolic intermediate biosynthesis; acetyl-CoA biosynthesis; acetyl-CoA from acetate: step 1/2. Catalyzes the formation of acetyl phosphate from acetate and ATP. Can also catalyze the reverse reaction. This Helicobacter hepaticus (strain ATCC 51449 / 3B1) protein is Acetate kinase.